The chain runs to 1456 residues: CLIP-associating protein 1-B (1456 aa).

3 HEAT repeats span residues Leu68–Thr87, Gln88–Asn124, and Leu163–Glu200. A disordered region spans residues Thr237–Ala296. Residues Ala284–Ala296 are compositionally biased toward low complexity. The stretch at Thr442–Thr479 is one HEAT 4 repeat. Disordered regions lie at residues Ser547 to Gly728 and Gly776 to Tyr796. A compositionally biased stretch (low complexity) spans Ser550–Leu569. Residues Arg573–Arg594 are compositionally biased toward polar residues. Composition is skewed to low complexity over residues Ala603–Ala618, Gln642–Asp656, and Val665–Gly679. The span at Gln711–Arg721 shows a compositional bias: polar residues. A compositionally biased stretch (low complexity) spans Ser785–Tyr796. Residues Gln930–Pro967 form an HEAT 5 repeat. 2 disordered regions span residues Leu1037–Pro1080 and Val1121–Gly1147. Residues Lys1038–Asn1050 show a composition bias toward low complexity. A compositionally biased stretch (polar residues) spans Ser1062 to Ser1074. Basic and acidic residues predominate over residues Val1121–Glu1130. HEAT repeat units follow at residues Glu1260 to Ala1297 and Gln1378 to Glu1415.

It belongs to the CLASP family. As to quaternary structure, interacts (via C-terminus) with clip1/clip-170, and cenpe.

It localises to the cytoplasm. Its subcellular location is the cytoskeleton. The protein localises to the microtubule organizing center. The protein resides in the centrosome. It is found in the chromosome. It localises to the centromere. Its subcellular location is the kinetochore. The protein localises to the spindle. The protein resides in the golgi apparatus. It is found in the trans-Golgi network. Its function is as follows. Microtubule plus-end tracking protein that promotes the stabilization of dynamic microtubules during anaphase. Plays a crucial role in chromatin-induced microtubule formation. May also act at microtubule minus ends. May be involved in the nucleation of noncentrosomal microtubules originating from the trans-Golgi network (TGN). The chain is CLIP-associating protein 1-B from Xenopus laevis (African clawed frog).